Here is a 77-residue protein sequence, read N- to C-terminus: UPF0401 protein ECP_3853 (77 aa).

This sequence belongs to the UPF0401 family.

This chain is UPF0401 protein ECP_3853, found in Escherichia coli O6:K15:H31 (strain 536 / UPEC).